The following is a 448-amino-acid chain: Tubulin beta-1 chain (448 aa).

8 residues coordinate GTP: Gln-11, Glu-72, Ser-141, Gly-145, Thr-146, Gly-147, Asn-207, and Asn-229. Glu-72 provides a ligand contact to Mg(2+). A disordered region spans residues 424 to 448 (QQYQDAGMDDDEAEEAYEEEEPVEE). A compositionally biased stretch (acidic residues) spans 430–448 (GMDDDEAEEAYEEEEPVEE).

This sequence belongs to the tubulin family. In terms of assembly, dimer of alpha and beta chains. A typical microtubule is a hollow water-filled tube with an outer diameter of 25 nm and an inner diameter of 15 nM. Alpha-beta heterodimers associate head-to-tail to form protofilaments running lengthwise along the microtubule wall with the beta-tubulin subunit facing the microtubule plus end conferring a structural polarity. Microtubules usually have 13 protofilaments but different protofilament numbers can be found in some organisms and specialized cells. Mg(2+) is required as a cofactor.

It localises to the cytoplasm. It is found in the cytoskeleton. In terms of biological role, tubulin is the major constituent of microtubules, a cylinder consisting of laterally associated linear protofilaments composed of alpha- and beta-tubulin heterodimers. Microtubules grow by the addition of GTP-tubulin dimers to the microtubule end, where a stabilizing cap forms. Below the cap, tubulin dimers are in GDP-bound state, owing to GTPase activity of alpha-tubulin. The sequence is that of Tubulin beta-1 chain (TUB1) from Colletotrichum gloeosporioides (Anthracnose fungus).